Consider the following 292-residue polypeptide: Undecaprenyl-diphosphatase (292 aa).

7 helical membrane-spanning segments follow: residues 1–21 (MSLV…FLPV), 46–66 (FVTI…RADI), 88–108 (ARLG…GKLL), 114–134 (ALGN…LLAA), 192–212 (FLLS…STVP), 225–245 (VVGT…LLAW), and 253–273 (VFVV…LSGV).

The protein belongs to the UppP family.

The protein localises to the cell inner membrane. It catalyses the reaction di-trans,octa-cis-undecaprenyl diphosphate + H2O = di-trans,octa-cis-undecaprenyl phosphate + phosphate + H(+). Functionally, catalyzes the dephosphorylation of undecaprenyl diphosphate (UPP). Confers resistance to bacitracin. This chain is Undecaprenyl-diphosphatase, found in Anaeromyxobacter dehalogenans (strain 2CP-C).